The sequence spans 138 residues: Transcription antitermination protein NusB (138 aa).

The protein belongs to the NusB family.

In terms of biological role, involved in transcription antitermination. Required for transcription of ribosomal RNA (rRNA) genes. Binds specifically to the boxA antiterminator sequence of the ribosomal RNA (rrn) operons. This chain is Transcription antitermination protein NusB, found in Helicobacter pylori (strain J99 / ATCC 700824) (Campylobacter pylori J99).